The primary structure comprises 245 residues: Eukaryotic translation initiation factor 3 subunit K (245 aa).

The 182-residue stretch at 46-227 (YDCYANLALL…EAKGTVVREN (182 aa)) folds into the PCI domain.

Belongs to the eIF-3 subunit K family. In terms of assembly, component of the eukaryotic translation initiation factor 3 (eIF-3) complex.

The protein localises to the cytoplasm. In terms of biological role, component of the eukaryotic translation initiation factor 3 (eIF-3) complex, which is involved in protein synthesis of a specialized repertoire of mRNAs and, together with other initiation factors, stimulates binding of mRNA and methionyl-tRNAi to the 40S ribosome. The eIF-3 complex specifically targets and initiates translation of a subset of mRNAs involved in cell proliferation. The chain is Eukaryotic translation initiation factor 3 subunit K from Sclerotinia sclerotiorum (strain ATCC 18683 / 1980 / Ss-1) (White mold).